The following is a 463-amino-acid chain: MTIGLSVTNDVFARDILTVAQLNQAVGQLLERSIPSLWVRGEISNFTQAASGHWYFTLKDSRAAVRTVMFRSRAAQVGFVPRPGDQVEVRARVSLYEPRGDYQLQADGMRRAGVGNLYEAFLRLKAQLQDEGLFDPQRKRQPARLPRAIGVVTSLHAAALRDVLSALARRAPQVPVIIYPAPVQGADAAARLAARVAQANQRAEVDTLLLVRGGGSIEDLWSFNDEALAREVAASDIPVISGVGHETDFTIVDFVADLRAPTPTAAAELACVPRGDLLAALRHTAERLARAQQRRLDQAAQRLDRAAAMLTSPAQRLAHQQERLNTLRHRLASAWRGPQGRRVARLDMLAQRLAHRRPDTGRAAERSAALLAQLGRAQARLAAARQARLDTLAAQLRALDPQHTLARGYAIVRDAAGAIVTDATRLAARDRIEIAVARGRIGADVTDIGTPDGTDGNPALRRG.

Belongs to the XseA family. In terms of assembly, heterooligomer composed of large and small subunits.

The protein localises to the cytoplasm. It catalyses the reaction Exonucleolytic cleavage in either 5'- to 3'- or 3'- to 5'-direction to yield nucleoside 5'-phosphates.. In terms of biological role, bidirectionally degrades single-stranded DNA into large acid-insoluble oligonucleotides, which are then degraded further into small acid-soluble oligonucleotides. The chain is Exodeoxyribonuclease 7 large subunit from Bordetella bronchiseptica (strain ATCC BAA-588 / NCTC 13252 / RB50) (Alcaligenes bronchisepticus).